A 332-amino-acid chain; its full sequence is Fructose-1,6-bisphosphatase class 1 (332 aa).

E92, D113, L115, and D116 together coordinate Mg(2+). Substrate-binding positions include 116–119, N209, Y242, and K272; that span reads DGSS. Mg(2+) is bound at residue E278.

It belongs to the FBPase class 1 family. As to quaternary structure, homotetramer. Mg(2+) serves as cofactor.

The protein localises to the cytoplasm. The catalysed reaction is beta-D-fructose 1,6-bisphosphate + H2O = beta-D-fructose 6-phosphate + phosphate. Its pathway is carbohydrate biosynthesis; Calvin cycle. The protein is Fructose-1,6-bisphosphatase class 1 of Prosthecochloris aestuarii (strain DSM 271 / SK 413).